A 372-amino-acid polypeptide reads, in one-letter code: 2,7-anhydro-N-acetylneuraminate hydratase (372 aa).

NAD(+) is bound by residues Tyr11, Phe12, Asp33, Asn36, Thr68, Asn70, His73, Glu90, Lys91, and Trp160.

Belongs to the Gfo/Idh/MocA family. Homodimer. It depends on NAD(+) as a cofactor.

The catalysed reaction is N-acetyl-2,7-anhydro-alpha-neuraminate + H2O = N-acetyl-alpha-neuraminate. The enzyme catalyses 2-deoxy-2,3-dehydro-N-acetylneuraminate + H2O = N-acetyl-alpha-neuraminate. With respect to regulation, all conversions require NAD(+) as a cofactor, which is regenerated in the reaction. The presence of EGTA and several divalent cations does not affect the activity. Its function is as follows. Hydratase involved in the degradation of sialic acids. Catalyzes the reversible conversion of the dehydrated form of N-acetylneuraminate (Neu5Ac), 2,7-anhydro-N-acetylneuraminate (2,7-AN), to Neu5Ac. Also catalyzes the irreversible conversion of 2-deoxy-2,3-didehydro-N-acetylneuraminate (2,3-EN) to Neu5Ac. The reaction mechanism involves keto intermediates and the transient formation of NADH. The chain is 2,7-anhydro-N-acetylneuraminate hydratase from Escherichia coli (strain K12).